Consider the following 130-residue polypeptide: uncharacterized protein (130 aa).

A helical membrane pass occupies residues 21 to 43 (VAVCTVAAEVLAIFTLVCTRVFI).

It is found in the membrane. This is an uncharacterized protein from Saccharomyces cerevisiae (strain ATCC 204508 / S288c) (Baker's yeast).